The primary structure comprises 343 residues: Aspartate-semialdehyde dehydrogenase (343 aa).

NADP(+) is bound by residues 13-16 (TGAV) and 41-42 (KS). A phosphate-binding site is contributed by arginine 103. The active-site Acyl-thioester intermediate is the cysteine 134. Substrate is bound at residue glutamine 161. 164 to 165 (SG) is an NADP(+) binding site. Lysine 220 contacts phosphate. Residue arginine 241 participates in substrate binding. Histidine 248 serves as the catalytic Proton acceptor. Glutamine 321 provides a ligand contact to NADP(+).

Belongs to the aspartate-semialdehyde dehydrogenase family. Homodimer.

The enzyme catalyses L-aspartate 4-semialdehyde + phosphate + NADP(+) = 4-phospho-L-aspartate + NADPH + H(+). The protein operates within amino-acid biosynthesis; L-lysine biosynthesis via DAP pathway; (S)-tetrahydrodipicolinate from L-aspartate: step 2/4. It participates in amino-acid biosynthesis; L-methionine biosynthesis via de novo pathway; L-homoserine from L-aspartate: step 2/3. It functions in the pathway amino-acid biosynthesis; L-threonine biosynthesis; L-threonine from L-aspartate: step 2/5. Catalyzes the NADPH-dependent formation of L-aspartate-semialdehyde (L-ASA) by the reductive dephosphorylation of L-aspartyl-4-phosphate. The protein is Aspartate-semialdehyde dehydrogenase of Campylobacter jejuni subsp. jejuni serotype O:2 (strain ATCC 700819 / NCTC 11168).